Reading from the N-terminus, the 508-residue chain is Photosystem II CP47 reaction center protein (508 aa).

6 consecutive transmembrane segments (helical) span residues 21-36 (SVHIMHTALVAGWAGS), 101-115 (IVFSGLCFLAAIWHW), 140-156 (GIHLFLAGVACFGFGAF), 203-218 (IAAGTLGILAGLFHLS), 237-252 (VLSSSIAAVFFAAFVV), and 457-472 (SFALLFFFGHIWHGAR).

It belongs to the PsbB/PsbC family. PsbB subfamily. As to quaternary structure, PSII is composed of 1 copy each of membrane proteins PsbA, PsbB, PsbC, PsbD, PsbE, PsbF, PsbH, PsbI, PsbJ, PsbK, PsbL, PsbM, PsbT, PsbX, PsbY, PsbZ, Psb30/Ycf12, at least 3 peripheral proteins of the oxygen-evolving complex and a large number of cofactors. It forms dimeric complexes. It depends on Binds multiple chlorophylls. PSII binds additional chlorophylls, carotenoids and specific lipids. as a cofactor.

The protein resides in the plastid. It localises to the chloroplast thylakoid membrane. One of the components of the core complex of photosystem II (PSII). It binds chlorophyll and helps catalyze the primary light-induced photochemical processes of PSII. PSII is a light-driven water:plastoquinone oxidoreductase, using light energy to abstract electrons from H(2)O, generating O(2) and a proton gradient subsequently used for ATP formation. In Lactuca sativa (Garden lettuce), this protein is Photosystem II CP47 reaction center protein.